Reading from the N-terminus, the 896-residue chain is NET1-associated nuclear protein 1 (896 aa).

WD repeat units follow at residues 295–334 (WHID…QQFL), 490–542 (LQDP…TNWN), 552–595 (GISV…SNWC), and 605–645 (NHFS…ESLE).

In terms of assembly, interacts with snoRNA U3. Interacts with MPP10. Component of the ribosomal small subunit (SSU) processome composed of at least 40 protein subunits and snoRNA U3. In the absence of snoRNA3, forms a complex with other t-UTPs. This complex can associate with pre-18S ribosomal RNAs.

Its subcellular location is the nucleus. The protein localises to the nucleolus. In terms of biological role, involved in nucleolar processing of pre-18S ribosomal RNA. Required for optimal pre-ribosomal RNA transcription by RNA polymerase I together with a subset of U3 proteins required for transcription (t-UTPs). This is NET1-associated nuclear protein 1 (NAN1) from Saccharomyces cerevisiae (strain ATCC 204508 / S288c) (Baker's yeast).